We begin with the raw amino-acid sequence, 407 residues long: Imidazolonepropionase (407 aa).

2 residues coordinate Fe(3+): His74 and His76. His74 and His76 together coordinate Zn(2+). Residues Arg83, Tyr146, and His179 each coordinate 4-imidazolone-5-propanoate. Tyr146 contributes to the N-formimidoyl-L-glutamate binding site. His244 contacts Fe(3+). His244 is a Zn(2+) binding site. Residue Gln247 participates in 4-imidazolone-5-propanoate binding. Asp319 contacts Fe(3+). A Zn(2+)-binding site is contributed by Asp319. N-formimidoyl-L-glutamate is bound by residues Asn321 and Gly323. Thr324 serves as a coordination point for 4-imidazolone-5-propanoate.

This sequence belongs to the metallo-dependent hydrolases superfamily. HutI family. Zn(2+) serves as cofactor. Fe(3+) is required as a cofactor.

The protein resides in the cytoplasm. The enzyme catalyses 4-imidazolone-5-propanoate + H2O = N-formimidoyl-L-glutamate. The protein operates within amino-acid degradation; L-histidine degradation into L-glutamate; N-formimidoyl-L-glutamate from L-histidine: step 3/3. Catalyzes the hydrolytic cleavage of the carbon-nitrogen bond in imidazolone-5-propanoate to yield N-formimidoyl-L-glutamate. It is the third step in the universal histidine degradation pathway. In Salmonella enteritidis PT4 (strain P125109), this protein is Imidazolonepropionase.